Consider the following 263-residue polypeptide: Orotidine 5'-phosphate decarboxylase (263 aa).

Substrate is bound by residues Asp38, Lys60–His62, Asp91–Thr100, Tyr213, and Arg232. Lys93 acts as the Proton donor in catalysis.

The protein belongs to the OMP decarboxylase family.

It catalyses the reaction orotidine 5'-phosphate + H(+) = UMP + CO2. Its pathway is pyrimidine metabolism; UMP biosynthesis via de novo pathway; UMP from orotate: step 2/2. This chain is Orotidine 5'-phosphate decarboxylase (PYR4), found in Rhizomucor pusillus.